A 120-amino-acid polypeptide reads, in one-letter code: Large ribosomal subunit protein bL20 (120 aa).

This sequence belongs to the bacterial ribosomal protein bL20 family.

In terms of biological role, binds directly to 23S ribosomal RNA and is necessary for the in vitro assembly process of the 50S ribosomal subunit. It is not involved in the protein synthesizing functions of that subunit. This is Large ribosomal subunit protein bL20 from Ligilactobacillus salivarius (strain UCC118) (Lactobacillus salivarius).